A 188-amino-acid polypeptide reads, in one-letter code: Pyridoxal 5'-phosphate synthase subunit PdxT (188 aa).

Residue 46–48 (GES) coordinates L-glutamine. The Nucleophile role is filled by Cys78. L-glutamine contacts are provided by residues Arg105 and 134–135 (IR). Active-site charge relay system residues include His170 and Glu172.

The protein belongs to the glutaminase PdxT/SNO family. In terms of assembly, in the presence of PdxS, forms a dodecamer of heterodimers. Only shows activity in the heterodimer.

The catalysed reaction is aldehydo-D-ribose 5-phosphate + D-glyceraldehyde 3-phosphate + L-glutamine = pyridoxal 5'-phosphate + L-glutamate + phosphate + 3 H2O + H(+). The enzyme catalyses L-glutamine + H2O = L-glutamate + NH4(+). The protein operates within cofactor biosynthesis; pyridoxal 5'-phosphate biosynthesis. In terms of biological role, catalyzes the hydrolysis of glutamine to glutamate and ammonia as part of the biosynthesis of pyridoxal 5'-phosphate. The resulting ammonia molecule is channeled to the active site of PdxS. The sequence is that of Pyridoxal 5'-phosphate synthase subunit PdxT from Moorella thermoacetica (strain ATCC 39073 / JCM 9320).